The primary structure comprises 456 residues: General transcription factor IIE subunit 1 (456 aa).

In terms of domain architecture, HTH TFE/IIEalpha-type spans 11 to 100 (LDDLVKMVIR…LWYIDYKHII (90 aa)). The C4-type zinc finger occupies 129–157 (CQTCHKVYTALDIPKLLNMDTGALACEIC). The tract at residues 345-402 (ESAPDSGDADGNGSNSGSGGSTIEGNDGGNGEHQNKKMKLDDSQTVSSMSQSDDDGKD) is disordered. Residues 347 to 357 (APDSGDADGNG) are compositionally biased toward low complexity. Positions 358–375 (SNSGSGGSTIEGNDGGNG) are enriched in gly residues. A compositionally biased stretch (basic and acidic residues) spans 377–386 (HQNKKMKLDD).

Belongs to the TFIIE alpha subunit family. In terms of assembly, TFIIE is a tetramer of two alpha and two beta subunits.

It localises to the nucleus. Recruits TFIIH to the initiation complex and stimulates the RNA polymerase II C-terminal domain kinase and DNA-dependent ATPase activities of TFIIH. Both TFIIH and TFIIE are required for promoter clearance by RNA polymerase. This is General transcription factor IIE subunit 1 (gtf2e1-1) from Dictyostelium discoideum (Social amoeba).